Consider the following 206-residue polypeptide: Protein GrpE (206 aa).

It belongs to the GrpE family. In terms of assembly, homodimer.

Its subcellular location is the cytoplasm. Its function is as follows. Participates actively in the response to hyperosmotic and heat shock by preventing the aggregation of stress-denatured proteins, in association with DnaK and GrpE. It is the nucleotide exchange factor for DnaK and may function as a thermosensor. Unfolded proteins bind initially to DnaJ; upon interaction with the DnaJ-bound protein, DnaK hydrolyzes its bound ATP, resulting in the formation of a stable complex. GrpE releases ADP from DnaK; ATP binding to DnaK triggers the release of the substrate protein, thus completing the reaction cycle. Several rounds of ATP-dependent interactions between DnaJ, DnaK and GrpE are required for fully efficient folding. This is Protein GrpE from Shewanella sp. (strain W3-18-1).